We begin with the raw amino-acid sequence, 252 residues long: MPVATRQRSARAAGTAFSPLRWIGFLLGCIVAGVVAMQVYFFLQIAAWQYVAPSSTSFMRAERWRLCGFNVWNCSIDRRWVPYDQISRNLKRAVIASEDADFVNHPGYEIDAMLDAWERNKKRGRVVRGGSTITQQLAKNLFLSSEQHYLRKGQELAITWMLEFWLDKQRIFEIYLNSVEWGEGVFGAEAAAQHYFRTNAGKLGVGQAARLAAALPAPKCFDKKEYCANVRVNFRVKAGIIARRMGAATLPD.

A helical membrane pass occupies residues 23–43 (IGFLLGCIVAGVVAMQVYFFL).

It belongs to the glycosyltransferase 51 family.

The protein resides in the cell inner membrane. It carries out the reaction [GlcNAc-(1-&gt;4)-Mur2Ac(oyl-L-Ala-gamma-D-Glu-L-Lys-D-Ala-D-Ala)](n)-di-trans,octa-cis-undecaprenyl diphosphate + beta-D-GlcNAc-(1-&gt;4)-Mur2Ac(oyl-L-Ala-gamma-D-Glu-L-Lys-D-Ala-D-Ala)-di-trans,octa-cis-undecaprenyl diphosphate = [GlcNAc-(1-&gt;4)-Mur2Ac(oyl-L-Ala-gamma-D-Glu-L-Lys-D-Ala-D-Ala)](n+1)-di-trans,octa-cis-undecaprenyl diphosphate + di-trans,octa-cis-undecaprenyl diphosphate + H(+). It participates in cell wall biogenesis; peptidoglycan biosynthesis. Its function is as follows. Peptidoglycan polymerase that catalyzes glycan chain elongation from lipid-linked precursors. This Cupriavidus pinatubonensis (strain JMP 134 / LMG 1197) (Cupriavidus necator (strain JMP 134)) protein is Biosynthetic peptidoglycan transglycosylase.